Consider the following 54-residue polypeptide: Large ribosomal subunit protein bL33A (54 aa).

Belongs to the bacterial ribosomal protein bL33 family.

The sequence is that of Large ribosomal subunit protein bL33A from Mycobacteroides abscessus (strain ATCC 19977 / DSM 44196 / CCUG 20993 / CIP 104536 / JCM 13569 / NCTC 13031 / TMC 1543 / L948) (Mycobacterium abscessus).